The chain runs to 401 residues: Phosphoglycerate kinase (401 aa).

Substrate-binding positions include 26-28, R41, 64-67, R125, and R158; these read DFN and HLGK. ATP is bound by residues K209, G300, E331, and 357 to 360; that span reads GGDS.

This sequence belongs to the phosphoglycerate kinase family. In terms of assembly, monomer.

It is found in the cytoplasm. It catalyses the reaction (2R)-3-phosphoglycerate + ATP = (2R)-3-phospho-glyceroyl phosphate + ADP. It participates in carbohydrate degradation; glycolysis; pyruvate from D-glyceraldehyde 3-phosphate: step 2/5. The polypeptide is Phosphoglycerate kinase (Clostridium tetani (strain Massachusetts / E88)).